Consider the following 37-residue polypeptide: Cytochrome b6-f complex subunit 5 (37 aa).

The helical transmembrane segment at 5 to 25 (LLFGIVLGLIPITLAGLFVTA) threads the bilayer.

Belongs to the PetG family. As to quaternary structure, the 4 large subunits of the cytochrome b6-f complex are cytochrome b6, subunit IV (17 kDa polypeptide, PetD), cytochrome f and the Rieske protein, while the 4 small subunits are PetG, PetL, PetM and PetN. The complex functions as a dimer.

Its subcellular location is the plastid. It is found in the chloroplast thylakoid membrane. Its function is as follows. Component of the cytochrome b6-f complex, which mediates electron transfer between photosystem II (PSII) and photosystem I (PSI), cyclic electron flow around PSI, and state transitions. PetG is required for either the stability or assembly of the cytochrome b6-f complex. The polypeptide is Cytochrome b6-f complex subunit 5 (Lemna minor (Common duckweed)).